Reading from the N-terminus, the 251-residue chain is Flap endonuclease Xni (251 aa).

Residue D104 participates in Mg(2+) binding. A 5'-3' exonuclease domain is found at 160 to 249 (VLPRQLPDYW…IDGNLQQLRL (90 aa)). The K(+) site is built by L171, A172, P180, V182, and I185. The interaction with DNA stretch occupies residues 184-189 (GIGPKS).

The protein belongs to the Xni family. Mg(2+) is required as a cofactor. K(+) serves as cofactor.

In terms of biological role, has flap endonuclease activity. During DNA replication, flap endonucleases cleave the 5'-overhanging flap structure that is generated by displacement synthesis when DNA polymerase encounters the 5'-end of a downstream Okazaki fragment. The protein is Flap endonuclease Xni of Salmonella dublin (strain CT_02021853).